The primary structure comprises 703 residues: Neoverrucotoxin subunit alpha (703 aa).

Position 2 is an N-acetylserine (serine 2). Residues 508 to 703 (PRMPFVQGYK…RFDHGTVRLL (196 aa)) enclose the B30.2/SPRY domain.

It belongs to the SNTX/VTX toxin family. As to quaternary structure, heterodimer of alpha and beta subunits. Not glycosylated. In terms of processing, four intrachain disulfide linkages are present in the heterodimer. No interchain disulfide bound links the two subunits. Expressed by the venom gland.

It is found in the secreted. Functionally, has hemolytic and lethal activities. Its hemolytic activity is inhibited by anionic lipids, especially potently by cardiolipin. This chain is Neoverrucotoxin subunit alpha, found in Synanceia verrucosa (Reef stonefish).